Here is a 504-residue protein sequence, read N- to C-terminus: MSFSVDVLANIAIELQRGIGHQDRFQRLITTLRQVLECDASALLRYDSRQFIPLAIDGLAKDVLGRRFALEGHPRLEAIARAGDVVRFPADSELPDPYDGLIPGQESLKVHACVGLPLFVGQNLIGALTLDGMQPDQFDVFSDEELRLIAALAAGALSNALLIEQLESQNMLPGDATPFEAVKQTQMIGLSPGMTQLKKEIEIVAASDLNVLISGETGTGKELVAKAIHEASPRAVNPLVYLNCAALPESVAESELFGHVKGAFTGAISNRSGKFEMADNGTLFLDEIGELSLALQAKLLRVLQYGDIQRVGDDRSLRVDVRVLAATNRDLREEVLAGRFRADLFHRLSVFPLSVPPLRERGDDVILLAGYFCEQCRLRQGLSRVVLSAGARNLLQHYSFPGNVRELEHAIHRAVVLARATRNGDEVILEAQHFAFPEVTLPPPEAAAVPVVKQNLREATEAFQRETIRQALAQNHHNWAACARMLETDVANLHRLAKRLGLKD.

At Asp-57 the chain carries 4-aspartylphosphate. Positions 187-416 (MIGLSPGMTQ…LEHAIHRAVV (230 aa)) constitute a Sigma-54 factor interaction domain. ATP is bound by residues 215 to 222 (GETGTGKE) and 278 to 287 (ADNGTLFLDE). Residues 479 to 498 (WAACARMLETDVANLHRLAK) constitute a DNA-binding region (H-T-H motif).

It functions in the pathway nitrogen metabolism; nitric oxide reduction. Required for the expression of anaerobic nitric oxide (NO) reductase, acts as a transcriptional activator for at least the norVW operon. Activation also requires sigma-54. This is Anaerobic nitric oxide reductase transcription regulator NorR from Shigella flexneri serotype 5b (strain 8401).